A 140-amino-acid polypeptide reads, in one-letter code: MKVSARRKARELALQGVYSWQMSHNDIQQVELALATSNDMQKVDMAYFQALLRGVAHNASKLDATIKPYLGRLPEELDAIEKAILRIATLELTERIDVPYRVIINEAIELAKAFGAEESHKFINGALDKAVRTLRKDERD.

Belongs to the NusB family.

Involved in transcription antitermination. Required for transcription of ribosomal RNA (rRNA) genes. Binds specifically to the boxA antiterminator sequence of the ribosomal RNA (rrn) operons. The protein is Transcription antitermination protein NusB of Alteromonas mediterranea (strain DSM 17117 / CIP 110805 / LMG 28347 / Deep ecotype).